A 148-amino-acid chain; its full sequence is Deoxyuridine 5'-triphosphate nucleotidohydrolase (148 aa).

Substrate is bound by residues 67–69, N80, 84–86, and M94; these read RSG and LID.

Belongs to the dUTPase family. Mg(2+) is required as a cofactor.

It catalyses the reaction dUTP + H2O = dUMP + diphosphate + H(+). Its pathway is pyrimidine metabolism; dUMP biosynthesis; dUMP from dCTP (dUTP route): step 2/2. Its function is as follows. This enzyme is involved in nucleotide metabolism: it produces dUMP, the immediate precursor of thymidine nucleotides and it decreases the intracellular concentration of dUTP so that uracil cannot be incorporated into DNA. The chain is Deoxyuridine 5'-triphosphate nucleotidohydrolase from Paraburkholderia xenovorans (strain LB400).